Consider the following 700-residue polypeptide: Acetoacetyl-CoA synthetase (700 aa).

The segment at 1–35 (MTAVSANGKTTEKHENGAHTNGTTNGTTNGSMNGN) is disordered. Low complexity predominate over residues 18–35 (AHTNGTTNGTTNGSMNGN).

The protein belongs to the ATP-dependent AMP-binding enzyme family. As to expression, present in most cells of the organism.

Its subcellular location is the cytoplasm. The protein localises to the nucleus. It carries out the reaction acetoacetate + ATP + CoA = acetoacetyl-CoA + AMP + diphosphate. Activates acetoacetate to acetoacetyl-CoA. Negatively regulates let-60 Ras activity during vulval induction. The polypeptide is Acetoacetyl-CoA synthetase (sur-5) (Caenorhabditis elegans).